Consider the following 215-residue polypeptide: MKTVLLTGFDPFGGESINPAWEVAKSLHEKTIGEYTIISKQVPTVFHKSIKVLKEYIEELNPEMIICIGQAGGRPDITIERVAINVDDARIADNEGNQPIDVPVAEEGPAAYWSTLPMKAIVKRLQEEGIPAFVSQTAGTFVCNHLFYGLMHELEKRDKKIKGGFIHIPFLPEQASKYPGQPSMSLSTIRKGIELAVEVTTTVEVDIVEVGGATH.

Residues E80, C143, and H167 contribute to the active site.

It belongs to the peptidase C15 family. In terms of assembly, homotetramer.

Its subcellular location is the cytoplasm. It carries out the reaction Release of an N-terminal pyroglutamyl group from a polypeptide, the second amino acid generally not being Pro.. In terms of biological role, removes 5-oxoproline from various penultimate amino acid residues except L-proline. This is Pyrrolidone-carboxylate peptidase from Bacillus cereus (strain G9842).